The following is a 284-amino-acid chain: Bifunctional protein FolD (284 aa).

NADP(+) contacts are provided by residues G165–S167 and S190.

Belongs to the tetrahydrofolate dehydrogenase/cyclohydrolase family. As to quaternary structure, homodimer.

The enzyme catalyses (6R)-5,10-methylene-5,6,7,8-tetrahydrofolate + NADP(+) = (6R)-5,10-methenyltetrahydrofolate + NADPH. The catalysed reaction is (6R)-5,10-methenyltetrahydrofolate + H2O = (6R)-10-formyltetrahydrofolate + H(+). It functions in the pathway one-carbon metabolism; tetrahydrofolate interconversion. Functionally, catalyzes the oxidation of 5,10-methylenetetrahydrofolate to 5,10-methenyltetrahydrofolate and then the hydrolysis of 5,10-methenyltetrahydrofolate to 10-formyltetrahydrofolate. The chain is Bifunctional protein FolD from Streptococcus pyogenes serotype M28 (strain MGAS6180).